The sequence spans 473 residues: 3-isopropylmalate dehydratase large subunit (473 aa).

Residues Cys348, Cys413, and Cys416 each coordinate [4Fe-4S] cluster.

The protein belongs to the aconitase/IPM isomerase family. LeuC type 1 subfamily. Heterodimer of LeuC and LeuD. The cofactor is [4Fe-4S] cluster.

The enzyme catalyses (2R,3S)-3-isopropylmalate = (2S)-2-isopropylmalate. Its pathway is amino-acid biosynthesis; L-leucine biosynthesis; L-leucine from 3-methyl-2-oxobutanoate: step 2/4. Its function is as follows. Catalyzes the isomerization between 2-isopropylmalate and 3-isopropylmalate, via the formation of 2-isopropylmaleate. This chain is 3-isopropylmalate dehydratase large subunit, found in Parvibaculum lavamentivorans (strain DS-1 / DSM 13023 / NCIMB 13966).